The following is a 179-amino-acid chain: NADH-quinone oxidoreductase subunit I (179 aa).

4Fe-4S ferredoxin-type domains are found at residues 45–74 and 90–119; these read RHPD…VEAA and KVYE…LGNE. Cysteine 54, cysteine 57, cysteine 60, cysteine 64, cysteine 99, cysteine 102, cysteine 105, and cysteine 109 together coordinate [4Fe-4S] cluster. A disordered region spans residues 146–179; the sequence is PQRREAQRTGKPVRLGFKVPKGPRPELEGVEYPR. The span at 168–179 shows a compositional bias: basic and acidic residues; it reads PRPELEGVEYPR.

This sequence belongs to the complex I 23 kDa subunit family. In terms of assembly, NDH-1 is composed of 15 different subunits. Subunits NuoA, H, J, K, L, M, N constitute the membrane sector of the complex. The cofactor is [4Fe-4S] cluster.

It localises to the cell membrane. It carries out the reaction a quinone + NADH + 5 H(+)(in) = a quinol + NAD(+) + 4 H(+)(out). In terms of biological role, NDH-1 shuttles electrons from NADH, via FMN and iron-sulfur (Fe-S) centers, to quinones in the respiratory chain. The immediate electron acceptor for the enzyme in this species is believed to be ubiquinone. Couples the redox reaction to proton translocation (for every two electrons transferred, four hydrogen ions are translocated across the cytoplasmic membrane), and thus conserves the redox energy in a proton gradient. The sequence is that of NADH-quinone oxidoreductase subunit I from Deinococcus geothermalis (strain DSM 11300 / CIP 105573 / AG-3a).